Here is a 169-residue protein sequence, read N- to C-terminus: Lipoprotein signal peptidase (169 aa).

A run of 2 helical transmembrane segments spans residues proline 59–tryptophan 79 and threonine 84–aspartate 104. Active-site residues include aspartate 113 and aspartate 139. Residues tryptophan 132–phenylalanine 152 form a helical membrane-spanning segment.

Belongs to the peptidase A8 family.

Its subcellular location is the cell inner membrane. It catalyses the reaction Release of signal peptides from bacterial membrane prolipoproteins. Hydrolyzes -Xaa-Yaa-Zaa-|-(S,diacylglyceryl)Cys-, in which Xaa is hydrophobic (preferably Leu), and Yaa (Ala or Ser) and Zaa (Gly or Ala) have small, neutral side chains.. It participates in protein modification; lipoprotein biosynthesis (signal peptide cleavage). In terms of biological role, this protein specifically catalyzes the removal of signal peptides from prolipoproteins. In Pelodictyon phaeoclathratiforme (strain DSM 5477 / BU-1), this protein is Lipoprotein signal peptidase.